We begin with the raw amino-acid sequence, 278 residues long: Large ribosomal subunit protein uL2 (278 aa).

Disordered regions lie at residues 27-58 and 224-278; these read STPE…GGGH and VVMN…GKKR. The span at 37 to 58 shows a compositional bias: basic residues; the sequence is LHGKGGRNAHGRITTRHKGGGH. Basic and acidic residues predominate over residues 253 to 268; that stretch reads PEGRTRKPNKPSDKLI. The span at 269–278 shows a compositional bias: basic residues; that stretch reads VRRRRTGKKR.

This sequence belongs to the universal ribosomal protein uL2 family. As to quaternary structure, part of the 50S ribosomal subunit. Forms a bridge to the 30S subunit in the 70S ribosome.

One of the primary rRNA binding proteins. Required for association of the 30S and 50S subunits to form the 70S ribosome, for tRNA binding and peptide bond formation. It has been suggested to have peptidyltransferase activity; this is somewhat controversial. Makes several contacts with the 16S rRNA in the 70S ribosome. The polypeptide is Large ribosomal subunit protein uL2 (Mycobacterium sp. (strain KMS)).